Here is a 223-residue protein sequence, read N- to C-terminus: Putative C-type lectin protein 51 (223 aa).

A signal peptide spans 1 to 31 (MAKRINFTSCLIFTSCFTAFIVSLCLLVSSC). The 108-residue stretch at 111–218 (QEGRCYHYSR…CDTPRRCLCG (108 aa)) folds into the C-type lectin domain. The cysteines at positions 193 and 209 are disulfide-linked.

This chain is Putative C-type lectin protein 51 (51), found in Equine herpesvirus 2 (strain 86/87) (EHV-2).